We begin with the raw amino-acid sequence, 200 residues long: GTP cyclohydrolase-2 (200 aa).

Residue 49–53 coordinates GTP; sequence RVHSE. Zn(2+) is bound by residues Cys-54, Cys-65, and Cys-67. Residues Gln-70, 92-94, and Thr-114 contribute to the GTP site; that span reads EGR. Catalysis depends on Asp-126, which acts as the Proton acceptor. Residue Arg-128 is the Nucleophile of the active site. 2 residues coordinate GTP: Thr-149 and Lys-154.

Belongs to the GTP cyclohydrolase II family. In terms of assembly, homodimer. The cofactor is Zn(2+).

The catalysed reaction is GTP + 4 H2O = 2,5-diamino-6-hydroxy-4-(5-phosphoribosylamino)-pyrimidine + formate + 2 phosphate + 3 H(+). It functions in the pathway cofactor biosynthesis; riboflavin biosynthesis; 5-amino-6-(D-ribitylamino)uracil from GTP: step 1/4. In terms of biological role, catalyzes the conversion of GTP to 2,5-diamino-6-ribosylamino-4(3H)-pyrimidinone 5'-phosphate (DARP), formate and pyrophosphate. In Klebsiella pneumoniae (strain 342), this protein is GTP cyclohydrolase-2.